Consider the following 133-residue polypeptide: Aspartate 1-decarboxylase (133 aa).

The active-site Schiff-base intermediate with substrate; via pyruvic acid is the Ser26. Ser26 is subject to Pyruvic acid (Ser). A substrate-binding site is contributed by Thr58. The active-site Proton donor is the Tyr59. 74-76 serves as a coordination point for substrate; that stretch reads GAA.

Belongs to the PanD family. As to quaternary structure, heterooctamer of four alpha and four beta subunits. Pyruvate is required as a cofactor. Post-translationally, is synthesized initially as an inactive proenzyme, which is activated by self-cleavage at a specific serine bond to produce a beta-subunit with a hydroxyl group at its C-terminus and an alpha-subunit with a pyruvoyl group at its N-terminus.

It is found in the cytoplasm. It catalyses the reaction L-aspartate + H(+) = beta-alanine + CO2. It functions in the pathway cofactor biosynthesis; (R)-pantothenate biosynthesis; beta-alanine from L-aspartate: step 1/1. Catalyzes the pyruvoyl-dependent decarboxylation of aspartate to produce beta-alanine. This chain is Aspartate 1-decarboxylase, found in Legionella pneumophila (strain Lens).